The primary structure comprises 249 residues: 1-(5-phosphoribosyl)-5-[(5-phosphoribosylamino)methylideneamino] imidazole-4-carboxamide isomerase (249 aa).

Aspartate 8 serves as the catalytic Proton acceptor. Aspartate 129 (proton donor) is an active-site residue.

Belongs to the HisA/HisF family.

It is found in the cytoplasm. It catalyses the reaction 1-(5-phospho-beta-D-ribosyl)-5-[(5-phospho-beta-D-ribosylamino)methylideneamino]imidazole-4-carboxamide = 5-[(5-phospho-1-deoxy-D-ribulos-1-ylimino)methylamino]-1-(5-phospho-beta-D-ribosyl)imidazole-4-carboxamide. It participates in amino-acid biosynthesis; L-histidine biosynthesis; L-histidine from 5-phospho-alpha-D-ribose 1-diphosphate: step 4/9. This Nitratidesulfovibrio vulgaris (strain ATCC 29579 / DSM 644 / CCUG 34227 / NCIMB 8303 / VKM B-1760 / Hildenborough) (Desulfovibrio vulgaris) protein is 1-(5-phosphoribosyl)-5-[(5-phosphoribosylamino)methylideneamino] imidazole-4-carboxamide isomerase.